The chain runs to 93 residues: SH3 domain-binding glutamic acid-rich-like protein 3 (93 aa).

Position 2 is an N-acetylserine (serine 2). A Glutaredoxin domain is found at 2-93; it reads SGLRVYSTSV…DTLQEFLKLA (92 aa). The O-linked (GalNAc...) threonine glycan is linked to threonine 9.

Belongs to the SH3BGR family. As to quaternary structure, homodimer. Interacts with MYO1C (via its IQ motifs); the interaction is dependent on calcium and takes place at membrane ruffles. May be glycosylated.

Its subcellular location is the cytoplasm. It is found in the cytosol. The protein localises to the cell projection. The protein resides in the ruffle membrane. It localises to the nucleus. Its function is as follows. Could act as a modulator of glutaredoxin biological activity. May play a role in cytoskeleton organization. This chain is SH3 domain-binding glutamic acid-rich-like protein 3 (Sh3bgrl3), found in Mus musculus (Mouse).